The primary structure comprises 153 residues: 3-hydroxyacyl-[acyl-carrier-protein] dehydratase FabZ (153 aa).

The active site involves His-54.

Belongs to the thioester dehydratase family. FabZ subfamily.

The protein localises to the cytoplasm. It carries out the reaction a (3R)-hydroxyacyl-[ACP] = a (2E)-enoyl-[ACP] + H2O. Functionally, involved in unsaturated fatty acids biosynthesis. Catalyzes the dehydration of short chain beta-hydroxyacyl-ACPs and long chain saturated and unsaturated beta-hydroxyacyl-ACPs. The protein is 3-hydroxyacyl-[acyl-carrier-protein] dehydratase FabZ of Chlamydia pneumoniae (Chlamydophila pneumoniae).